We begin with the raw amino-acid sequence, 489 residues long: Tripartite motif-containing protein 10 (489 aa).

An RING-type zinc finger spans residues 16–61 (CPVCQGTLREPVTIDCGHNFCRVCLTRYLEITSPDPEEPPTCPLCK). The B box-type zinc-finger motif lies at 94 to 135 (DEEDVCPEHGEKVYFFCEDDEMQLCVVCREAWEHRAHTVRFL). Zn(2+) is bound by residues C99, H102, C121, and H127. Residues 142–245 (YREQIQKCLE…IEELEEKKER (104 aa)) adopt a coiled-coil conformation. A B30.2/SPRY domain is found at 292-486 (REMKMFLEKL…FSLSSQEGAA (195 aa)).

It belongs to the TRIM/RBCC family. As to quaternary structure, interacts with IFNAR1; this interaction prevents association of IFNAR1 with TYK2.

Its subcellular location is the cytoplasm. In terms of biological role, E3 ligase that plays an essential role in the differentiation and survival of terminal erythroid cells. May directly bind to PTEN and promote its ubiquitination, resulting in its proteasomal degradation and activation of hypertrophic signaling. In addition, plays a role in immune response regulation by repressing the phosphorylation of STAT1 and STAT2 in the interferon/JAK/STAT signaling pathway independent of its E3 ligase activity. Mechanistically, interacts with the intracellular domain of IFNAR1 and thereby inhibits the association between TYK2 and IFNAR1. This is Tripartite motif-containing protein 10 (TRIM10) from Bos taurus (Bovine).